The primary structure comprises 250 residues: Pyridoxine 5'-phosphate synthase (250 aa).

3-amino-2-oxopropyl phosphate is bound by residues Asn-8 and Arg-19. His-44 (proton acceptor) is an active-site residue. 1-deoxy-D-xylulose 5-phosphate contacts are provided by Arg-46 and His-51. The Proton acceptor role is filled by Glu-76. Thr-106 serves as a coordination point for 1-deoxy-D-xylulose 5-phosphate. His-200 serves as the catalytic Proton donor. Residues Asp-201 and 223-224 (GH) contribute to the 3-amino-2-oxopropyl phosphate site.

It belongs to the PNP synthase family. As to quaternary structure, homooctamer; tetramer of dimers.

The protein resides in the cytoplasm. It catalyses the reaction 3-amino-2-oxopropyl phosphate + 1-deoxy-D-xylulose 5-phosphate = pyridoxine 5'-phosphate + phosphate + 2 H2O + H(+). The protein operates within cofactor biosynthesis; pyridoxine 5'-phosphate biosynthesis; pyridoxine 5'-phosphate from D-erythrose 4-phosphate: step 5/5. In terms of biological role, catalyzes the complicated ring closure reaction between the two acyclic compounds 1-deoxy-D-xylulose-5-phosphate (DXP) and 3-amino-2-oxopropyl phosphate (1-amino-acetone-3-phosphate or AAP) to form pyridoxine 5'-phosphate (PNP) and inorganic phosphate. This chain is Pyridoxine 5'-phosphate synthase, found in Allorhizobium ampelinum (strain ATCC BAA-846 / DSM 112012 / S4) (Agrobacterium vitis (strain S4)).